The following is a 250-amino-acid chain: 1-(5-phosphoribosyl)-5-[(5-phosphoribosylamino)methylideneamino] imidazole-4-carboxamide isomerase (250 aa).

Catalysis depends on Asp12, which acts as the Proton acceptor. Residue Asp134 is the Proton donor of the active site.

Belongs to the HisA/HisF family.

Its subcellular location is the cytoplasm. The catalysed reaction is 1-(5-phospho-beta-D-ribosyl)-5-[(5-phospho-beta-D-ribosylamino)methylideneamino]imidazole-4-carboxamide = 5-[(5-phospho-1-deoxy-D-ribulos-1-ylimino)methylamino]-1-(5-phospho-beta-D-ribosyl)imidazole-4-carboxamide. Its pathway is amino-acid biosynthesis; L-histidine biosynthesis; L-histidine from 5-phospho-alpha-D-ribose 1-diphosphate: step 4/9. The protein is 1-(5-phosphoribosyl)-5-[(5-phosphoribosylamino)methylideneamino] imidazole-4-carboxamide isomerase of Actinobacillus pleuropneumoniae serotype 7 (strain AP76).